A 275-amino-acid polypeptide reads, in one-letter code: Small ribosomal subunit protein uS2 (275 aa).

Residues 244–275 are disordered; sequence REGAEASKKKATVKKKAAPRAASGESAEAAAE. Over residues 252-261 the composition is skewed to basic residues; the sequence is KKATVKKKAA. Residues 262–275 are compositionally biased toward low complexity; the sequence is PRAASGESAEAAAE.

The protein belongs to the universal ribosomal protein uS2 family.

This Thioalkalivibrio sulfidiphilus (strain HL-EbGR7) protein is Small ribosomal subunit protein uS2.